We begin with the raw amino-acid sequence, 230 residues long: Large ribosomal subunit protein uL1 (230 aa).

This sequence belongs to the universal ribosomal protein uL1 family. As to quaternary structure, part of the 50S ribosomal subunit.

Functionally, binds directly to 23S rRNA. The L1 stalk is quite mobile in the ribosome, and is involved in E site tRNA release. Its function is as follows. Protein L1 is also a translational repressor protein, it controls the translation of the L11 operon by binding to its mRNA. In Afipia carboxidovorans (strain ATCC 49405 / DSM 1227 / KCTC 32145 / OM5) (Oligotropha carboxidovorans), this protein is Large ribosomal subunit protein uL1.